A 1196-amino-acid chain; its full sequence is Tubulin-specific chaperone D (1196 aa).

4 HEAT repeats span residues 363-401, 599-634, 752-788, and 1106-1142; these read VIEQLLVGLKDKDTVVRWSAAKGIGRMAGRLPRELADDV, YIAMHVFPALLLMTQSPDLHTRHGAILACAEVTYAL, SSIAKELIPQYLAELQSPEEMARCGFSSALGALPGFL, and GDVRKKILLQLFLLLGHPFPVIRKSTASQVYEMVLTY.

Belongs to the TBCD family. As to quaternary structure, found in a complex with at least ARL2, PPP2CB, PPP2R1A, PPP2R2A, PPP2R5E and TBCD. Interacts with PPP2CB. Part of a supercomplex made of cofactors A to E. Cofactors A and D function by capturing and stabilizing tubulin in a quasi-native conformation. Cofactor E binds to the cofactor D-tubulin complex; interaction with cofactor C then causes the release of tubulin polypeptides that are committed to the native state. Interacts with ARL2; interaction is enhanced with the GDP-bound form of ARL2. Does not interact with ARL3, ARL4A and ARL4D. Interacts with beta tubulin. Interacts with TBCE.

The protein resides in the cell junction. It localises to the tight junction. It is found in the lateral cell membrane. The protein localises to the cytoplasm. Its subcellular location is the adherens junction. The protein resides in the cytoskeleton. It localises to the microtubule organizing center. It is found in the centrosome. Tubulin-folding protein implicated in the first step of the tubulin folding pathway and required for tubulin complex assembly. Involved in the regulation of microtubule polymerization or depolymerization, it modulates microtubule dynamics by capturing GTP-bound beta-tubulin (TUBB). Its ability to interact with beta tubulin is regulated via its interaction with ARL2. Acts as a GTPase-activating protein (GAP) for ARL2. Induces microtubule disruption in absence of ARL2. Increases degradation of beta tubulin, when overexpressed in polarized cells. Promotes epithelial cell detachment, a process antagonized by ARL2. Induces tight adherens and tight junctions disassembly at the lateral cell membrane. Required for correct assembly and maintenance of the mitotic spindle, and proper progression of mitosis. Involved in neuron morphogenesis. In Mus musculus (Mouse), this protein is Tubulin-specific chaperone D (Tbcd).